A 553-amino-acid chain; its full sequence is Syntaxin-binding protein 4 (553 aa).

Phosphoserine is present on residues S10, S12, S99, and S212. Residues 19 to 105 (AFQMITIAKE…RLESAWEIAF (87 aa)) enclose the PDZ domain. Positions 291-417 (SSEADEMERL…VLDCQLRKSE (127 aa)) form a coiled coil. S463 carries the phosphoserine modification. A WW domain is found at 496–529 (DCLPYGWEEAYTADGIKYFINHVTQTTSWIHPVM).

In terms of assembly, interacts with STX4A. Phosphorylated on Ser-99 by PKB/AKT2 after insulin treatment. Phosphorylation on Ser-99 abolishes the interaction with STX4A.

The protein localises to the cytoplasm. Functionally, plays a role in the translocation of transport vesicles from the cytoplasm to the plasma membrane. Inhibits the translocation of SLC2A4 from intracellular vesicles to the plasma membrane by STX4A binding and preventing the interaction between STX4A and VAMP2. Stimulation with insulin disrupts the interaction with STX4A, leading to increased levels of SLC2A4 at the plasma membrane. May also play a role in the regulation of insulin release by pancreatic beta cells after stimulation by glucose. This Homo sapiens (Human) protein is Syntaxin-binding protein 4 (STXBP4).